Reading from the N-terminus, the 385-residue chain is 3,5,7-trioxododecanoyl-CoA synthase (385 aa).

The active site involves Cys157.

Belongs to the thiolase-like superfamily. Chalcone/stilbene synthases family. As to expression, expressed in bracts, flowers and young leaves. Not detected in mature leaves, roots and stems. Expressed in glandular trichomes.

It carries out the reaction hexanoyl-CoA + 3 malonyl-CoA + 3 H(+) = 3,5,7-trioxododecanoyl-CoA + 3 CO2 + 3 CoA. It catalyses the reaction 3,5,7-trioxododecanoyl-CoA = olivetol + CO2 + CoA. It participates in secondary metabolite biosynthesis; terpenoid biosynthesis. In terms of biological role, involved in the biosynthesis of cannabinoids-related terpenophenolic natural products, which have pharmacological activity. Polyketide synthase responsible for olivetol biosynthesis, from a C(12)-polyketide, probably 3,5,7-trioxododecanoyl-CoA. Catalyzes the first step in the cannabinoids biosynthetic pathway. The preferred substrate is hexanoyl-CoA, but also accepts CoA esters with C4 to C8 aliphatic side chains. When using malonyl-CoA and hexanoyl-CoA as substrates, produces undetermined compounds distinct form olivetol or olivetolic acid that could be hexanoyl triacetic acid lactone (HTAL) and pentyl diacetic acid lactone (PDAL). Produces olivetolic acid when acting in concert with olivetolic acid cyclase (OAC). This Cannabis sativa (Hemp) protein is 3,5,7-trioxododecanoyl-CoA synthase.